A 420-amino-acid polypeptide reads, in one-letter code: Tol-Pal system protein TolB (420 aa).

Residues 1-21 (MKLFVHLVLFISLFIPYFTKA) form the signal peptide.

This sequence belongs to the TolB family. As to quaternary structure, the Tol-Pal system is composed of five core proteins: the inner membrane proteins TolA, TolQ and TolR, the periplasmic protein TolB and the outer membrane protein Pal. They form a network linking the inner and outer membranes and the peptidoglycan layer.

The protein resides in the periplasm. Part of the Tol-Pal system, which plays a role in outer membrane invagination during cell division and is important for maintaining outer membrane integrity. The protein is Tol-Pal system protein TolB of Wolbachia pipientis wMel.